The sequence spans 615 residues: MRPAFEPAAGLGRAHPHETTPRSIDADVAIIGAGPVGLMIANILGLQGVRVVVVEKLTQIIDYPRAIGLDDEALRVFQSVGLAEALLPHTTPNHWMRFTLNGKCFASIEPRTDEFGWPRRNAFIQPLADQILYRGLERFDHVSTLLGHNVDRFAQDESGVTIDATDAHGVRTTIRAAYMVGADGGNSFVRRTLDVPFEGRTKPNQWIVIDVRNDPIGSPHVYLHCDARRPYVSAALPHGIRRFEFMVMPGETEEELSKPENMAALVRGVVDDPDKVDYIRQRVYTHNARLASVFRVKRILLAGDAAHIMPVWQGQGYNSGIRDASNLGWKLAMVVKGTARDALLDTYTMERRAHARSMIHLSEVAGDIFAPTSFVGTRVRDAFVRCFDVLPSLKRYFVEMRFKPMPRYEDGVVLLARRARSEGMLARLIASRGHGAFGRLVGLMSEKRESLLGRIVHGRDAQAGTPVGRMYIQPRVRVADGSIVRLDDAIGNRFAILSWGTDPTFGLTPEARRIWSALGGCFVLAKPDPQLGFRDDVPEDVIAIGDVDSRLRDWFARVPESVVLLRPDRFVAGMCSPQCVSECVSQLAQRLSLSVATGAQADDATFAPAAGLVGA.

Residues 1 to 20 (MRPAFEPAAGLGRAHPHETT) form a disordered region. FAD contacts are provided by residues 27–56 (DVAI…VVEK) and 294–304 (FRVKRILLAGD).

It belongs to the PheA/TfdB FAD monooxygenase family. It depends on FAD as a cofactor.

It catalyses the reaction 3-(3-hydroxyphenyl)propanoate + NADH + O2 + H(+) = 3-(2,3-dihydroxyphenyl)propanoate + NAD(+) + H2O. It carries out the reaction (2E)-3-(3-hydroxyphenyl)prop-2-enoate + NADH + O2 + H(+) = (2E)-3-(2,3-dihydroxyphenyl)prop-2-enoate + NAD(+) + H2O. It functions in the pathway aromatic compound metabolism; 3-phenylpropanoate degradation. Its function is as follows. Catalyzes the insertion of one atom of molecular oxygen into position 2 of the phenyl ring of 3-(3-hydroxyphenyl)propionate (3-HPP) and hydroxycinnamic acid (3HCI). This Burkholderia vietnamiensis (strain G4 / LMG 22486) (Burkholderia cepacia (strain R1808)) protein is 3-(3-hydroxy-phenyl)propionate/3-hydroxycinnamic acid hydroxylase 1.